We begin with the raw amino-acid sequence, 671 residues long: DEAD-box ATP-dependent RNA helicase 7 (671 aa).

A disordered region spans residues 1-84; that stretch reads MPSLMLSDKK…EKKKSSKKVK (84 aa). The segment covering 26–41 has biased composition (basic and acidic residues); the sequence is LDSKKGKKEQKLKLSD. Phosphoserine occurs at positions 40 and 42. Over residues 50 to 60 the composition is skewed to basic residues; that stretch reads KKSKKKDKKRK. A Q motif motif is present at residues 96–124; it reads NAVSKFRISAPLREKLKANGIEALFPIQA. Positions 127–309 constitute a Helicase ATP-binding domain; sequence FDMVLDGADL…NRFLKRDQKT (183 aa). ATP is bound at residue 140-147; sequence ARTGQGKT. A DEAD box motif is present at residues 255–258; it reads DEAD. The Helicase C-terminal domain occupies 339 to 479; sequence LIPDIISCYS…HLAAPQPDEI (141 aa). Residues 627-671 form a disordered region; it reads EREPLPQKRFGGGGRGNRFGGGGGNRFGGGGGRGRGGSGGRGQRY. Gly residues predominate over residues 636–671; it reads FGGGGRGNRFGGGGGNRFGGGGGRGRGGSGGRGQRY.

The protein belongs to the DEAD box helicase family. DDX21/DDX50 subfamily.

It localises to the nucleus. It carries out the reaction ATP + H2O = ADP + phosphate + H(+). The protein is DEAD-box ATP-dependent RNA helicase 7 (RH7) of Arabidopsis thaliana (Mouse-ear cress).